Reading from the N-terminus, the 357-residue chain is Holliday junction branch migration complex subunit RuvB (357 aa).

The disordered stretch occupies residues 1 to 27 (MGRFSNADGPGDDADEREVTPALTVGE). The large ATPase domain (RuvB-L) stretch occupies residues 1–195 (MGRFSNADGP…FGFTAHMDFY (195 aa)). Residues L34, R35, G76, K79, T80, S81, 142-144 (EDF), R185, Y195, and R232 contribute to the ATP site. T80 serves as a coordination point for Mg(2+). The tract at residues 196–266 (EPAELERVLA…IAKYALEVYD (71 aa)) is small ATPAse domain (RuvB-S). The interval 269 to 357 (ELGLDRLDRA…GGLGQVGLFE (89 aa)) is head domain (RuvB-H). DNA contacts are provided by R324 and R329.

Belongs to the RuvB family. As to quaternary structure, homohexamer. Forms an RuvA(8)-RuvB(12)-Holliday junction (HJ) complex. HJ DNA is sandwiched between 2 RuvA tetramers; dsDNA enters through RuvA and exits via RuvB. An RuvB hexamer assembles on each DNA strand where it exits the tetramer. Each RuvB hexamer is contacted by two RuvA subunits (via domain III) on 2 adjacent RuvB subunits; this complex drives branch migration. In the full resolvosome a probable DNA-RuvA(4)-RuvB(12)-RuvC(2) complex forms which resolves the HJ.

The protein localises to the cytoplasm. It carries out the reaction ATP + H2O = ADP + phosphate + H(+). In terms of biological role, the RuvA-RuvB-RuvC complex processes Holliday junction (HJ) DNA during genetic recombination and DNA repair, while the RuvA-RuvB complex plays an important role in the rescue of blocked DNA replication forks via replication fork reversal (RFR). RuvA specifically binds to HJ cruciform DNA, conferring on it an open structure. The RuvB hexamer acts as an ATP-dependent pump, pulling dsDNA into and through the RuvAB complex. RuvB forms 2 homohexamers on either side of HJ DNA bound by 1 or 2 RuvA tetramers; 4 subunits per hexamer contact DNA at a time. Coordinated motions by a converter formed by DNA-disengaged RuvB subunits stimulates ATP hydrolysis and nucleotide exchange. Immobilization of the converter enables RuvB to convert the ATP-contained energy into a lever motion, pulling 2 nucleotides of DNA out of the RuvA tetramer per ATP hydrolyzed, thus driving DNA branch migration. The RuvB motors rotate together with the DNA substrate, which together with the progressing nucleotide cycle form the mechanistic basis for DNA recombination by continuous HJ branch migration. Branch migration allows RuvC to scan DNA until it finds its consensus sequence, where it cleaves and resolves cruciform DNA. In Mycolicibacterium gilvum (strain PYR-GCK) (Mycobacterium gilvum (strain PYR-GCK)), this protein is Holliday junction branch migration complex subunit RuvB.